The primary structure comprises 492 residues: ATP synthase subunit beta, chloroplastic (492 aa).

170–177 (GGAGVGKT) contacts ATP.

This sequence belongs to the ATPase alpha/beta chains family. F-type ATPases have 2 components, CF(1) - the catalytic core - and CF(0) - the membrane proton channel. CF(1) has five subunits: alpha(3), beta(3), gamma(1), delta(1), epsilon(1). CF(0) has four main subunits: a(1), b(1), b'(1) and c(9-12).

It localises to the plastid. Its subcellular location is the chloroplast thylakoid membrane. It catalyses the reaction ATP + H2O + 4 H(+)(in) = ADP + phosphate + 5 H(+)(out). Functionally, produces ATP from ADP in the presence of a proton gradient across the membrane. The catalytic sites are hosted primarily by the beta subunits. The sequence is that of ATP synthase subunit beta, chloroplastic from Psilotum nudum (Whisk fern).